We begin with the raw amino-acid sequence, 785 residues long: Cadherin-7 (785 aa).

A signal peptide spans 1-27 (MKLGKVELCRFLQLIALFLCFSGMNQA). The propeptide occupies 28–47 (ELPRSRSKPYFQLGRSRTKR). Over 28–607 (ELPRSRSKPY…AYILPAGLST (580 aa)) the chain is Extracellular. 5 consecutive Cadherin domains span residues 49–153 (WVWN…EPKF), 154–262 (LDGP…PPRF), 263–377 (PRRS…PPVF), 378–482 (SSPL…APEF), and 482–599 (FAMD…AEAY). Asn449 and Asn530 each carry an N-linked (GlcNAc...) asparagine glycan. A helical transmembrane segment spans residues 608 to 628 (GALIAILACVLTLLVLILLIV). Residues 629-785 (TMKRRKKEPL…YGNGQESLYS (157 aa)) lie on the Cytoplasmic side of the membrane.

It is found in the cell membrane. In terms of biological role, cadherins are calcium-dependent cell adhesion proteins. They preferentially interact with themselves in a homophilic manner in connecting cells; cadherins may thus contribute to the sorting of heterogeneous cell types. This chain is Cadherin-7 (Cdh7), found in Rattus norvegicus (Rat).